Here is an 833-residue protein sequence, read N- to C-terminus: Leucine--tRNA ligase (833 aa).

The 'HIGH' region motif lies at 41–52 (PYPSGAGLHVGH). A 'KMSKS' region motif is present at residues 610 to 614 (KMSKS). Residue K613 coordinates ATP.

It belongs to the class-I aminoacyl-tRNA synthetase family.

Its subcellular location is the cytoplasm. It catalyses the reaction tRNA(Leu) + L-leucine + ATP = L-leucyl-tRNA(Leu) + AMP + diphosphate. The protein is Leucine--tRNA ligase of Streptococcus pyogenes serotype M4 (strain MGAS10750).